We begin with the raw amino-acid sequence, 266 residues long: Tryptophan synthase alpha chain (266 aa).

Active-site proton acceptor residues include E46 and D57.

The protein belongs to the TrpA family. In terms of assembly, tetramer of two alpha and two beta chains.

The catalysed reaction is (1S,2R)-1-C-(indol-3-yl)glycerol 3-phosphate + L-serine = D-glyceraldehyde 3-phosphate + L-tryptophan + H2O. The protein operates within amino-acid biosynthesis; L-tryptophan biosynthesis; L-tryptophan from chorismate: step 5/5. Functionally, the alpha subunit is responsible for the aldol cleavage of indoleglycerol phosphate to indole and glyceraldehyde 3-phosphate. The chain is Tryptophan synthase alpha chain from Lacticaseibacillus casei (Lactobacillus casei).